The chain runs to 130 residues: Small ribosomal subunit protein uS9 (130 aa).

Positions 107 to 130 (DARMKERKKPGLKKARKASQFSKR) are disordered. Positions 111–130 (KERKKPGLKKARKASQFSKR) are enriched in basic residues.

This sequence belongs to the universal ribosomal protein uS9 family.

The protein is Small ribosomal subunit protein uS9 of Ligilactobacillus salivarius (strain UCC118) (Lactobacillus salivarius).